A 266-amino-acid chain; its full sequence is Pyridoxal phosphate phosphatase YigL (266 aa).

The active-site Nucleophile is the D8. D8 serves as a coordination point for Mg(2+). L9 is a binding site for phosphate. Mg(2+) is bound at residue D10. Residues 42–43 (TG) and K191 contribute to the phosphate site. Position 214 (D214) interacts with Mg(2+). N217 contributes to the phosphate binding site.

It belongs to the HAD-like hydrolase superfamily. Cof family. Requires Mg(2+) as cofactor. It depends on Mn(2+) as a cofactor. Co(2+) serves as cofactor. Zn(2+) is required as a cofactor.

The enzyme catalyses pyridoxal 5'-phosphate + H2O = pyridoxal + phosphate. It catalyses the reaction sugar phosphate + H2O = sugar + phosphate.. In terms of biological role, catalyzes Strongly the dephosphorylation of pyridoxal-phosphate (PLP) and moderately the dephosphorylation of 2-deoxyglucose 6-phosphate (2bGLU6P) and beta-glucose 6-phosphate (bGlu6P). Also hydrolyzes both purines (GMP and IMP) and pyrimidines as secondary substrates. The chain is Pyridoxal phosphate phosphatase YigL (yigL) from Escherichia coli (strain K12).